We begin with the raw amino-acid sequence, 146 residues long: Large-conductance mechanosensitive channel (146 aa).

2 helical membrane-spanning segments follow: residues 12 to 32 and 83 to 103; these read AFAM…GGAF and GNFL…FLFI.

This sequence belongs to the MscL family. In terms of assembly, homopentamer.

The protein localises to the cell inner membrane. In terms of biological role, channel that opens in response to stretch forces in the membrane lipid bilayer. May participate in the regulation of osmotic pressure changes within the cell. The protein is Large-conductance mechanosensitive channel of Phocaeicola vulgatus (strain ATCC 8482 / DSM 1447 / JCM 5826 / CCUG 4940 / NBRC 14291 / NCTC 11154) (Bacteroides vulgatus).